The following is a 523-amino-acid chain: Signal peptide peptidase-like 2A (523 aa).

A signal peptide spans 1-25; it reads MGLLHSLHAPAAALLWSCLLGLAAA. Residues 26 to 175 are Lumenal-facing; sequence QEAILHASTN…PSWPNFDYTL (150 aa). N-linked (GlcNAc...) asparagine glycosylation is found at Asn51, Asn61, Asn69, Asn119, Asn129, and Asn135. A PA domain is found at 70–155; sequence LTGTALCHLS…KDFKDMKETL (86 aa). The helical transmembrane segment at 176 to 196 threads the bilayer; it reads VVIFVIAVFTVALGGYWSGLI. The Cytoplasmic segment spans residues 197–224; the sequence is ELENMKSVEDAEDRETRKKKDDYLTFSP. Residues 225-245 traverse the membrane as a helical segment; sequence LTVVVFVVICCIMIVLLYFFY. The Lumenal segment spans residues 246-247; it reads RW. The chain crosses the membrane as a helical span at residues 248–268; that stretch reads LVYVMIAIFCIASSMSLYNCL. The Cytoplasmic portion of the chain corresponds to 269-288; that stretch reads SALIHRMPCGQCTILCCGKN. A helical membrane pass occupies residues 289-309; it reads IKVSLIFLSGLCISVAVVWAV. The Lumenal portion of the chain corresponds to 310–315; that stretch reads FRNEDR. The helical transmembrane segment at 316–336 threads the bilayer; sequence WAWILQDILGIAFCLNLIKTM. The Cytoplasmic segment spans residues 337–344; that stretch reads KLPNFMSC. A helical membrane pass occupies residues 345–365; the sequence is VILLGLLLIYDVFFVFITPFI. Residue Asp355 is part of the active site. At 366 to 403 the chain is on the lumenal side; the sequence is TKNGESIMVELAAGPFENAEKLPVVIRVPKLMGYSVMS. Residues 404–424 form a helical membrane-spanning segment; the sequence is VCSVPVSVLGFGDIIVPGLLI. Residue Asp416 is part of the active site. Residues 425 to 440 are Cytoplasmic-facing; that stretch reads AYCRRFDVQTGSSIYY. The helical transmembrane segment at 441–461 threads the bilayer; it reads ISSTIAYAVGMIITFVVLMVM. Residues 462 to 463 are Lumenal-facing; it reads KT. A helical membrane pass occupies residues 464 to 484; it reads GQPALLYLVPCTLITVSVVAW. A PAL motif is present at residues 466–468; that stretch reads PAL. The Cytoplasmic segment spans residues 485–523; the sequence is SRKEMKKFWKGSSYQVMDHLDYSTNEENPVTTDEQIVQQ. The YXXo lysosomal targeting motif signature appears at 498-501; that stretch reads YQVM.

The protein belongs to the peptidase A22B family. In terms of assembly, interacts with ITM2B. In terms of processing, glycosylated.

It localises to the late endosome membrane. The protein resides in the lysosome membrane. Its subcellular location is the membrane. Intramembrane-cleaving aspartic protease (I-CLiP) that cleaves type II membrane signal peptides in the hydrophobic plane of the membrane. Functions in FASLG, ITM2B and TNF processing. Catalyzes the intramembrane cleavage of the anchored fragment of shed TNF-alpha (TNF), which promotes the release of the intracellular domain (ICD) for signaling to the nucleus. Also responsible for the intramembrane cleavage of Fas antigen ligand FASLG, which promotes the release of the intracellular FasL domain (FasL ICD). Essential for degradation of the invariant chain CD74 that plays a central role in the function of antigen-presenting cells in the immune system. Plays a role in the regulation of innate and adaptive immunity. This chain is Signal peptide peptidase-like 2A, found in Mus musculus (Mouse).